The primary structure comprises 232 residues: 7-cyano-7-deazaguanine synthase (232 aa).

7 to 17 (CSGGLDSVSLA) lines the ATP pocket. 4 residues coordinate Zn(2+): Cys185, Cys193, Cys196, and Cys199.

This sequence belongs to the QueC family. It depends on Zn(2+) as a cofactor.

The catalysed reaction is 7-carboxy-7-deazaguanine + NH4(+) + ATP = 7-cyano-7-deazaguanine + ADP + phosphate + H2O + H(+). It participates in purine metabolism; 7-cyano-7-deazaguanine biosynthesis. Catalyzes the ATP-dependent conversion of 7-carboxy-7-deazaguanine (CDG) to 7-cyano-7-deazaguanine (preQ(0)). The protein is 7-cyano-7-deazaguanine synthase of Brucella anthropi (strain ATCC 49188 / DSM 6882 / CCUG 24695 / JCM 21032 / LMG 3331 / NBRC 15819 / NCTC 12168 / Alc 37) (Ochrobactrum anthropi).